Here is a 104-residue protein sequence, read N- to C-terminus: Integration host factor subunit beta (104 aa).

Belongs to the bacterial histone-like protein family. As to quaternary structure, heterodimer of an alpha and a beta chain.

Its function is as follows. This protein is one of the two subunits of integration host factor, a specific DNA-binding protein that functions in genetic recombination as well as in transcriptional and translational control. The protein is Integration host factor subunit beta (ihfB) of Xylella fastidiosa (strain 9a5c).